The sequence spans 813 residues: MSAFLNLYRNTLSWPLSFLVKDNPIPNNPVEELTLNIEQPIVYVLPYTSQTDLVVLRKNCLSLGLPDPFLDNRIEGKVLPRYVFLDEGHQFFKSKGAKKETEKVFKNYLELHRTSADLDVQVVPVSVLWGRSPGREDKGLPKLRLLNGLQKTIAAIWFGRDTFVRFSQAMSMRYMVNEYGEDEKLAQKLPRIAKMHFAKQRISATGPRLPNRQAMFNKLLQHPAVLQAIEDEARGKNMTKEKARKEAEKILNEIAADTNYSSLRVADRLLGWLWNKLYQGIEVEHADRVRRLALEGHEIVYVPCHRSHIDYLLLSYVLYHQGLVPPHIAAGINLNFWPVGRIFRSWGAFFIRRTFKGNRLYSTLFREYLGELFHRGYSVEYFIEGGRSRTGRLLTPKTGMMSMTLQALQQGQTRPISIVPVYVGYEHVLEVDTYAKELRGAAKEKENAGLVLRVIKKLRNLGRGFVNFGEPITLSTYLNRHFPEWKNEGRDERPLWFNKAVDAVSRQVMVNINKAAAVNAMNLTGTALLSSRQRALSREQLLEQLESYQQYLLNVSYSDDIIIPSAPPKELLDHVLGLDRVGILIEKDNFGELVRLERNHAVLMTYYRNNIQHLLVLPSLVASIVLHHEAIQKDLVLTSVEKLYPFLKAELFMHLPPEALREKVERIIAELHRQQLIKLNENILSINRPRVRTLQLWSAGMREILQRYLITVAILLQDPAISRGKLEKESQSIAQRLSVLHGINSPEFFDKAVFSTFIASLKDNGYFDTSGNADVTKLQGMADILEHVISTEINLTIKSAVETAVDLDEIESE.

Positions 304 to 309 (CHRSHI) match the HXXXXD motif motif.

It belongs to the GPAT/DAPAT family.

It localises to the cell inner membrane. The catalysed reaction is sn-glycerol 3-phosphate + an acyl-CoA = a 1-acyl-sn-glycero-3-phosphate + CoA. Its pathway is phospholipid metabolism; CDP-diacylglycerol biosynthesis; CDP-diacylglycerol from sn-glycerol 3-phosphate: step 1/3. The protein is Glycerol-3-phosphate acyltransferase of Actinobacillus succinogenes (strain ATCC 55618 / DSM 22257 / CCUG 43843 / 130Z).